Reading from the N-terminus, the 73-residue chain is Exodeoxyribonuclease 7 small subunit (73 aa).

The protein belongs to the XseB family. Heterooligomer composed of large and small subunits.

It is found in the cytoplasm. It carries out the reaction Exonucleolytic cleavage in either 5'- to 3'- or 3'- to 5'-direction to yield nucleoside 5'-phosphates.. Its function is as follows. Bidirectionally degrades single-stranded DNA into large acid-insoluble oligonucleotides, which are then degraded further into small acid-soluble oligonucleotides. This chain is Exodeoxyribonuclease 7 small subunit, found in Clostridium novyi (strain NT).